Reading from the N-terminus, the 453-residue chain is Glucose N-acetyltransferase 1-B (453 aa).

The Cytoplasmic portion of the chain corresponds to 1 to 8 (MLKRKVRY). The chain crosses the membrane as a helical; Signal-anchor for type II membrane protein span at residues 9-29 (LLLIVVVFTGIILSVEAIMRF). The Lumenal segment spans residues 30 to 453 (QLNKNVDYYL…LESRAICQVN (424 aa)). Asn108, Asn126, and Asn176 each carry an N-linked (GlcNAc...) asparagine glycan. The DXD signature appears at 187–189 (DND).

It belongs to the GNT1 family.

The protein localises to the golgi apparatus membrane. It is found in the vacuole membrane. N-acetylglucosaminyltransferase involved in the Golgi-specific modification of N-linked glycans. The protein is Glucose N-acetyltransferase 1-B (GNT1-B) of Kluyveromyces lactis (strain ATCC 8585 / CBS 2359 / DSM 70799 / NBRC 1267 / NRRL Y-1140 / WM37) (Yeast).